A 128-amino-acid polypeptide reads, in one-letter code: Fluoride-specific ion channel FluC 2 (128 aa).

4 consecutive transmembrane segments (helical) span residues 13 to 35 (ALVA…AIAG), 40 to 59 (LAAN…EAAA), 71 to 93 (LLGT…TAGL), and 97 to 119 (WMAA…GRAI).

This sequence belongs to the fluoride channel Fluc/FEX (TC 1.A.43) family.

It is found in the cell membrane. The enzyme catalyses fluoride(in) = fluoride(out). Its function is as follows. Fluoride-specific ion channel. Important for reducing fluoride concentration in the cell, thus reducing its toxicity. In Halobacterium salinarum (strain ATCC 700922 / JCM 11081 / NRC-1) (Halobacterium halobium), this protein is Fluoride-specific ion channel FluC 2.